Reading from the N-terminus, the 104-residue chain is Thioredoxin-2 (104 aa).

A Thioredoxin domain is found at 2–104; sequence VTQLKSASEY…AIKQAIASNV (103 aa). Active-site nucleophile residues include Cys31 and Cys34. A disulfide bridge links Cys31 with Cys34. Ser62 is subject to Phosphoserine. Glycyl lysine isopeptide (Lys-Gly) (interchain with G-Cter in ubiquitin) cross-links involve residues Lys67 and Lys97.

Belongs to the thioredoxin family. As to quaternary structure, monomer. Part of the heterodimeric LMA1 complex together with the proteinase inhibitor PBI2. LMA1 binds to the ATPase SEC18. In terms of processing, reversible disulfide bond formation between Cys-31 and Cys-34, reverted by thioredoxin reductase TRR1 using NADPH as hydrogen donor.

It localises to the cytoplasm. Its subcellular location is the golgi apparatus membrane. The protein resides in the nucleus. In terms of biological role, participates as a hydrogen donor in redox reactions through the reversible oxidation of its active center dithiol to a disulfide, accompanied by the transfer of 2 electrons and 2 protons. It is involved in many cellular processes, including deoxyribonucleotide synthesis, repair of oxidatively damaged proteins, protein folding, sulfur metabolism, and redox homeostasis. Thioredoxin-dependent enzymes include phosphoadenosine-phosphosulfate reductase MET16, alkyl-hydroperoxide reductase DOT5, thioredoxin peroxidases TSA1 and TSA2, alkyl hydroperoxide reductase AHP1, and peroxiredoxin HYR1. Thioredoxin is also involved in protection against reducing stress. As part of the LMA1 complex, it is involved in the facilitation of vesicle fusion such as homotypic vacuole and ER-derived COPII vesicle fusion with the Golgi. This activity does not require the redox mechanism. Through its capacity to inactivate the stress response transcription factor YAP1 and its regulator the hydroperoxide stress sensor HYR1, it is involved in feedback regulation of stress response gene expression upon oxidative stress. The sequence is that of Thioredoxin-2 (TRX2) from Saccharomyces cerevisiae (strain ATCC 204508 / S288c) (Baker's yeast).